A 363-amino-acid chain; its full sequence is dTDP-3-amino-3,6-dideoxy-alpha-D-galactopyranose transaminase (363 aa).

The residue at position 185 (Lys-185) is an N6-(pyridoxal phosphate)lysine.

This sequence belongs to the DegT/DnrJ/EryC1 family. It depends on pyridoxal 5'-phosphate as a cofactor.

It carries out the reaction dTDP-3-amino-3,6-dideoxy-alpha-D-galactopyranose + 2-oxoglutarate = dTDP-3-dehydro-6-deoxy-alpha-D-galactose + L-glutamate. Functionally, specifically aminates dTDP-6-deoxy-D-xylohex-3-ulose to form dTDP-D-Fucp3N in the biosynthesis of dTDP-3-acetamido-3,6-dideoxy-alpha-D-galactose, a glycan chain of the S-layer. In Aneurinibacillus thermoaerophilus, this protein is dTDP-3-amino-3,6-dideoxy-alpha-D-galactopyranose transaminase (fdtB).